Reading from the N-terminus, the 292-residue chain is Shikimate dehydrogenase (NADP(+)) (292 aa).

Residues 25–27 (SKS) and Thr72 each bind shikimate. The Proton acceptor role is filled by Lys76. Positions 97 and 113 each coordinate shikimate. NADP(+)-binding positions include 137-141 (GAGGA), 161-166 (NRTQSK), and Met230. Tyr232 contributes to the shikimate binding site. Residue Gly254 coordinates NADP(+).

Belongs to the shikimate dehydrogenase family. In terms of assembly, homodimer.

It catalyses the reaction shikimate + NADP(+) = 3-dehydroshikimate + NADPH + H(+). The protein operates within metabolic intermediate biosynthesis; chorismate biosynthesis; chorismate from D-erythrose 4-phosphate and phosphoenolpyruvate: step 4/7. Its function is as follows. Involved in the biosynthesis of the chorismate, which leads to the biosynthesis of aromatic amino acids. Catalyzes the reversible NADPH linked reduction of 3-dehydroshikimate (DHSA) to yield shikimate (SA). This Shewanella sp. (strain ANA-3) protein is Shikimate dehydrogenase (NADP(+)).